A 208-amino-acid polypeptide reads, in one-letter code: Small ribosomal subunit protein bS6 (208 aa).

Disordered stretches follow at residues 121 to 143 (SENNPDNPDAPVTSGLASVKPRL) and 185 to 208 (NQQTSQANNNQPRFQNQFKKGAKP). Over residues 185 to 195 (NQQTSQANNNQ) the composition is skewed to low complexity.

The protein belongs to the bacterial ribosomal protein bS6 family.

Functionally, binds together with bS18 to 16S ribosomal RNA. This is Small ribosomal subunit protein bS6 (rpsF) from Mycoplasma genitalium (strain ATCC 33530 / DSM 19775 / NCTC 10195 / G37) (Mycoplasmoides genitalium).